Here is a 354-residue protein sequence, read N- to C-terminus: Histone-lysine N-methyltransferase SUVR3 (354 aa).

The region spanning 143 to 188 (SGCECERCEEGYCKCLAFAGMEEIANECGSGCGCGSDCSNRVTQKG) is the Pre-SET domain. Residues cysteine 145, cysteine 147, cysteine 150, cysteine 155, cysteine 157, cysteine 170, cysteine 174, cysteine 176, and cysteine 180 each contribute to the Zn(2+) site. The SET domain maps to 191 to 323 (VSLKIVRDEK…AEEELSFSYG (133 aa)). Residues 201 to 203 (KGW) and 281 to 282 (NH) contribute to the S-adenosyl-L-methionine site. Cysteine 284 is a binding site for Zn(2+). Tyrosine 322 lines the S-adenosyl-L-methionine pocket. The region spanning 334–350 (DKLNCSCGSSCCLGTLP) is the Post-SET domain. Positions 338, 340, and 345 each coordinate Zn(2+).

It belongs to the class V-like SAM-binding methyltransferase superfamily.

It is found in the nucleus. The protein resides in the chromosome. The enzyme catalyses L-lysyl-[histone] + S-adenosyl-L-methionine = N(6)-methyl-L-lysyl-[histone] + S-adenosyl-L-homocysteine + H(+). Functionally, histone methyltransferase. The polypeptide is Histone-lysine N-methyltransferase SUVR3 (SUVR3) (Arabidopsis thaliana (Mouse-ear cress)).